Here is a 791-residue protein sequence, read N- to C-terminus: DUF1769 family protein duc1 (791 aa).

The tract at residues 158–189 (ADSQESDTESLPEINDSSDVSLSDLPSTNVTP) is disordered. Residues 174 to 184 (SSDVSLSDLPS) are compositionally biased toward low complexity. Positions 373 to 379 (RYFTALE) match the FFAT motif. Tyrosine 374 carries the post-translational modification Phosphotyrosine. At threonine 376 the chain carries Phosphothreonine. 3 disordered regions span residues 381 to 505 (QQDQ…SNRR), 542 to 606 (NVAG…VDGK), and 630 to 658 (PKPV…NLDP). Residues 415-426 (LIKRMSLRSKKS) are compositionally biased toward basic residues. Low complexity predominate over residues 444–453 (STASAASTSA). The span at 455-473 (KTEKEKKMSAPRRSLDKLI) shows a compositional bias: basic and acidic residues. Serine 477 and serine 493 each carry phosphoserine. A compositionally biased stretch (basic residues) spans 477–487 (SLHRHHHHHHK). Polar residues predominate over residues 555-564 (EQTSITSGVP). Serine 574 carries the post-translational modification Phosphoserine. Over residues 574-586 (STPEKIVEERSID) the composition is skewed to basic and acidic residues. Residues 587 to 601 (EVSQSNTPSSKQLPQ) show a composition bias toward polar residues.

The protein belongs to the UPF0590 family. In terms of assembly, interacts (via FFAT-motif) with scs2 (via MSP domain); the interaction is direct and serves to restrict the localization of duc1 to areas of cell membrane-endoplasmic reticulum contact sites, and away from the cell division site.

The protein resides in the cell membrane. Promotes the proper distribution of phosphatidylinositol 4,5-bisphosphate (PtdIns(4,5)P2/PIP2) synthesis at the cell membrane. May bind phosphatidylinositol 4,5-bisphosphate (PtdIns(4,5)P2/PIP2) and is required for robust anchoring of the contractile ring to the cell membrane. The chain is DUF1769 family protein duc1 from Schizosaccharomyces pombe (strain 972 / ATCC 24843) (Fission yeast).